The primary structure comprises 203 residues: Glycerol-3-phosphate acyltransferase (203 aa).

The next 6 membrane-spanning stretches (helical) occupy residues 5–25, 58–78, 87–107, 118–138, 150–170, and 176–196; these read IIYLLAYLIGAIPFGLLLAQI, TLAVATVILDALKGVLPILMA, ILWTMAVLAVFGHCFSPYLKF, GVLAVFLPFEIICALLAWFII, LGAMIVLIATSFIFHYDIPVI, and IFIIAFIVVYKHIPNILRLIG.

The protein belongs to the PlsY family. In terms of assembly, probably interacts with PlsX.

It localises to the cell inner membrane. The enzyme catalyses an acyl phosphate + sn-glycerol 3-phosphate = a 1-acyl-sn-glycero-3-phosphate + phosphate. It participates in lipid metabolism; phospholipid metabolism. Its function is as follows. Catalyzes the transfer of an acyl group from acyl-phosphate (acyl-PO(4)) to glycerol-3-phosphate (G3P) to form lysophosphatidic acid (LPA). This enzyme utilizes acyl-phosphate as fatty acyl donor, but not acyl-CoA or acyl-ACP. The protein is Glycerol-3-phosphate acyltransferase of Campylobacter lari (strain RM2100 / D67 / ATCC BAA-1060).